Here is a 235-residue protein sequence, read N- to C-terminus: Lipoprotein-releasing system ATP-binding protein LolD (235 aa).

The 223-residue stretch at 13-235 (LCCSNIIKRY…SNGMLKISTI (223 aa)) folds into the ABC transporter domain. 49–56 (GASGSGKS) is a binding site for ATP.

It belongs to the ABC transporter superfamily. Lipoprotein translocase (TC 3.A.1.125) family. The complex is composed of two ATP-binding proteins (LolD) and two transmembrane proteins (LolC and LolE).

The protein localises to the cell inner membrane. In terms of biological role, part of the ABC transporter complex LolCDE involved in the translocation of mature outer membrane-directed lipoproteins, from the inner membrane to the periplasmic chaperone, LolA. Responsible for the formation of the LolA-lipoprotein complex in an ATP-dependent manner. The chain is Lipoprotein-releasing system ATP-binding protein LolD from Blochmanniella floridana.